A 242-amino-acid polypeptide reads, in one-letter code: ATP synthase subunit a (242 aa).

Helical transmembrane passes span 29–49 (SSIYMLLASILALTYFYLAFY), 84–104 (FIPLVFSLFIFILFCNLLGMT), 114–134 (IIVTFTLAILVFLMVTIVGFV), 140–160 (FLTLFLPHGTPLWLAPLMIVI), 181–201 (MAGHVLLKVIAGFTVSLMIYL), and 203–223 (FLPIPIMVILIGFEIFVAILQ).

It belongs to the ATPase A chain family. As to quaternary structure, F-type ATPases have 2 components, CF(1) - the catalytic core - and CF(0) - the membrane proton channel. CF(1) has five subunits: alpha(3), beta(3), gamma(1), delta(1), epsilon(1). CF(0) has three main subunits: a(1), b(2) and c(9-12). The alpha and beta chains form an alternating ring which encloses part of the gamma chain. CF(1) is attached to CF(0) by a central stalk formed by the gamma and epsilon chains, while a peripheral stalk is formed by the delta and b chains.

The protein localises to the cell inner membrane. Key component of the proton channel; it plays a direct role in the translocation of protons across the membrane. This Rickettsia conorii (strain ATCC VR-613 / Malish 7) protein is ATP synthase subunit a.